A 340-amino-acid polypeptide reads, in one-letter code: Short-chain dehydrogenase/reductase prx1 (340 aa).

Positions 60, 84, 104, 131, and 162 each coordinate NADP(+). The active-site Proton donor is S184. NADP(+)-binding residues include Y210 and K214. The active-site Proton acceptor is Y210. Residue K214 is the Lowers pKa of active site Tyr of the active site.

Belongs to the short-chain dehydrogenases/reductases (SDR) family.

It participates in sesquiterpene biosynthesis. Functionally, short-chain dehydrogenase/reductase; part of the gene cluster that mediates the biosynthesis of PR-toxin, a bicyclic sesquiterpene belonging to the eremophilane class and acting as a mycotoxin. The first step of the pathway is catalyzed by the aristolochene synthase which performs the cyclization of trans,trans-farnesyl diphosphate (FPP) to the bicyclic sesquiterpene aristolochene. Following the formation of aristolochene, the non-oxygenated aristolochene is converted to the trioxygenated intermediate eremofortin B, via 7-epi-neopetasone. This conversion appears to involve three enzymes, a hydroxysterol oxidase-like enzyme, the quinone-oxidase prx3 that forms the quinone-type-structure in the bicyclic nucleus of aristolochene with the C8-oxo group and the C-3 hydroxyl group, and the P450 monooxygenase prx9 that introduces the epoxide at the double bond between carbons 1 and 2. No monoxy or dioxy-intermediates have been reported to be released to the broth, so these three early oxidative reactions may be coupled together. Eremofortin B is further oxidized by another P450 monooxygenase, that introduces a second epoxide between carbons 7 and 11 prior to acetylation to eremofortin A by the acetyltransferase prx11. The second epoxidation may be performed by a second P450 monooxygenase. After the acetylation step, eremofortin A is converted to eremofortin C and then to PR-toxin. First the conversion of eremofortin A to eremofortin C proceeds by oxidation of the side chain of the molecule at C-12 and is catalyzed by the short-chain oxidoreductase prx1. The cytochrome P450 monooxygenase prx8 also plays a role in this step. The primary alcohol formed at C-12 is finally oxidized by the short-chain alcohol dehydrogenase prx4 that forms PR-toxin. The sequence is that of Short-chain dehydrogenase/reductase prx1 from Penicillium rubens (strain ATCC 28089 / DSM 1075 / NRRL 1951 / Wisconsin 54-1255) (Penicillium chrysogenum).